We begin with the raw amino-acid sequence, 245 residues long: 1-(5-phosphoribosyl)-5-[(5-phosphoribosylamino)methylideneamino] imidazole-4-carboxamide isomerase (245 aa).

Aspartate 7 acts as the Proton acceptor in catalysis. The active-site Proton donor is aspartate 129.

It belongs to the HisA/HisF family.

It localises to the cytoplasm. The catalysed reaction is 1-(5-phospho-beta-D-ribosyl)-5-[(5-phospho-beta-D-ribosylamino)methylideneamino]imidazole-4-carboxamide = 5-[(5-phospho-1-deoxy-D-ribulos-1-ylimino)methylamino]-1-(5-phospho-beta-D-ribosyl)imidazole-4-carboxamide. The protein operates within amino-acid biosynthesis; L-histidine biosynthesis; L-histidine from 5-phospho-alpha-D-ribose 1-diphosphate: step 4/9. The sequence is that of 1-(5-phosphoribosyl)-5-[(5-phosphoribosylamino)methylideneamino] imidazole-4-carboxamide isomerase from Proteus mirabilis (strain HI4320).